The sequence spans 127 residues: Fluoride-specific ion channel FluC (127 aa).

The next 4 helical transmembrane spans lie at 4 to 24 (LDYL…YLVS), 39 to 59 (GTII…FAAI), 68 to 88 (AILF…TFTY), and 102 to 122 (VAYA…GMIL). Na(+) is bound by residues Gly78 and Thr81.

Belongs to the fluoride channel Fluc/FEX (TC 1.A.43) family.

Its subcellular location is the cell inner membrane. The enzyme catalyses fluoride(in) = fluoride(out). With respect to regulation, na(+) is not transported, but it plays an essential structural role and its presence is essential for fluoride channel function. In terms of biological role, fluoride-specific ion channel. Important for reducing fluoride concentration in the cell, thus reducing its toxicity. The sequence is that of Fluoride-specific ion channel FluC from Thermotoga petrophila (strain ATCC BAA-488 / DSM 13995 / JCM 10881 / RKU-1).